Reading from the N-terminus, the 365-residue chain is Peptide chain release factor 2 (365 aa).

Residue Gln-251 is modified to N5-methylglutamine.

This sequence belongs to the prokaryotic/mitochondrial release factor family. In terms of processing, methylated by PrmC. Methylation increases the termination efficiency of RF2.

The protein resides in the cytoplasm. In terms of biological role, peptide chain release factor 2 directs the termination of translation in response to the peptide chain termination codons UGA and UAA. This is Peptide chain release factor 2 from Campylobacter jejuni (strain RM1221).